The chain runs to 385 residues: Gibberellin 20 oxidase 5 (385 aa).

Residues 224–324 (DGSGIFRCNY…RRSLVFFSCP (101 aa)) enclose the Fe2OG dioxygenase domain. Residues histidine 249, aspartate 251, and histidine 305 each contribute to the Fe cation site. Arginine 315 is a catalytic residue.

The protein belongs to the iron/ascorbate-dependent oxidoreductase family. GA20OX subfamily. Requires Fe(2+) as cofactor. L-ascorbate serves as cofactor. In terms of tissue distribution, expressed in 3-day-old seedlings and siliques. Detected in dry seeds, roots, old leaves and inflorescences.

The enzyme catalyses gibberellin A12 + 2 2-oxoglutarate + 3 O2 + H(+) = gibberellin A9 + 2 succinate + 3 CO2 + 2 H2O. It catalyses the reaction gibberellin A53 + 2 2-oxoglutarate + 3 O2 + H(+) = gibberellin A20 + 2 succinate + 3 CO2 + 2 H2O. It functions in the pathway plant hormone biosynthesis; gibberellin biosynthesis. Its function is as follows. Key oxidase enzyme in the biosynthesis of gibberellin that catalyzes the conversion of GA12 and GA53 to GA9 and GA20 respectively, via a three-step oxidation at C-20 of the GA skeleton. This chain is Gibberellin 20 oxidase 5 (GA20OX5), found in Arabidopsis thaliana (Mouse-ear cress).